We begin with the raw amino-acid sequence, 319 residues long: Cobalamin biosynthesis protein CobD (319 aa).

The next 4 membrane-spanning stretches (helical) occupy residues 56–76 (GLWI…LWLM), 153–173 (VDGV…LAMA), 204–224 (LANW…AWFI), and 290–310 (IPLS…LFAL).

This sequence belongs to the CobD/CbiB family.

The protein resides in the cell membrane. Its pathway is cofactor biosynthesis; adenosylcobalamin biosynthesis. Converts cobyric acid to cobinamide by the addition of aminopropanol on the F carboxylic group. In Photorhabdus laumondii subsp. laumondii (strain DSM 15139 / CIP 105565 / TT01) (Photorhabdus luminescens subsp. laumondii), this protein is Cobalamin biosynthesis protein CobD.